The sequence spans 79 residues: UPF0180 protein BCE_1513 (79 aa).

It belongs to the UPF0180 family.

This Bacillus cereus (strain ATCC 10987 / NRS 248) protein is UPF0180 protein BCE_1513.